A 158-amino-acid chain; its full sequence is Single-stranded DNA-binding protein 2 (158 aa).

The SSB domain occupies Met-1–Leu-107. A disordered region spans residues Arg-109 to Thr-158.

As to quaternary structure, homotetramer.

This Streptomyces avermitilis (strain ATCC 31267 / DSM 46492 / JCM 5070 / NBRC 14893 / NCIMB 12804 / NRRL 8165 / MA-4680) protein is Single-stranded DNA-binding protein 2 (ssb2).